Consider the following 103-residue polypeptide: UPF0235 protein Dole_0289 (103 aa).

It belongs to the UPF0235 family.

This chain is UPF0235 protein Dole_0289, found in Desulfosudis oleivorans (strain DSM 6200 / JCM 39069 / Hxd3) (Desulfococcus oleovorans).